We begin with the raw amino-acid sequence, 345 residues long: Anthranilate phosphoribosyltransferase (345 aa).

Residues Gly84, 87–88 (GD), Thr92, 94–97 (NIST), 112–120 (KHGNRSVSS), and Ser124 each bind 5-phospho-alpha-D-ribose 1-diphosphate. Residue Gly84 participates in anthranilate binding. Residue Ser96 participates in Mg(2+) binding. Residue Asn115 participates in anthranilate binding. Arg170 is an anthranilate binding site. The Mg(2+) site is built by Asp229 and Glu230.

This sequence belongs to the anthranilate phosphoribosyltransferase family. As to quaternary structure, homodimer. Mg(2+) is required as a cofactor.

The enzyme catalyses N-(5-phospho-beta-D-ribosyl)anthranilate + diphosphate = 5-phospho-alpha-D-ribose 1-diphosphate + anthranilate. The protein operates within amino-acid biosynthesis; L-tryptophan biosynthesis; L-tryptophan from chorismate: step 2/5. In terms of biological role, catalyzes the transfer of the phosphoribosyl group of 5-phosphorylribose-1-pyrophosphate (PRPP) to anthranilate to yield N-(5'-phosphoribosyl)-anthranilate (PRA). The chain is Anthranilate phosphoribosyltransferase from Xanthomonas campestris pv. campestris (strain 8004).